A 497-amino-acid chain; its full sequence is L-arabinose isomerase (497 aa).

Residues E306, E333, H349, and H448 each contribute to the Mn(2+) site.

Belongs to the arabinose isomerase family. Requires Mn(2+) as cofactor.

The enzyme catalyses beta-L-arabinopyranose = L-ribulose. The protein operates within carbohydrate degradation; L-arabinose degradation via L-ribulose; D-xylulose 5-phosphate from L-arabinose (bacterial route): step 1/3. In terms of biological role, catalyzes the conversion of L-arabinose to L-ribulose. This Vibrio parahaemolyticus serotype O3:K6 (strain RIMD 2210633) protein is L-arabinose isomerase.